A 736-amino-acid polypeptide reads, in one-letter code: Myotubularin-related protein 12 (736 aa).

The Myotubularin phosphatase domain maps to 182–558; the sequence is YLRSTNPEML…RQLSLPSSAF (377 aa). Residues 672–691 are disordered; it reads SLATQPDHPPPLHHRLPSFG.

It belongs to the protein-tyrosine phosphatase family. Non-receptor class myotubularin subfamily. In terms of assembly, heterodimer with lipid phosphatase mtm1. In skeletal muscles, the interaction stabilizes both mtmr12 and mtm1 protein levels.

It localises to the cytoplasm. It is found in the sarcoplasmic reticulum. The protein resides in the myofibril. Its subcellular location is the sarcomere. Acts as an adapter for the myotubularin phosphatase mtm1 to regulate mtm1 protein stability and possibly its intracellular location. By stabilizing mtm1 protein levels, required for skeletal muscle maintenance but not for myogenesis. In skeletal muscle cells, does not regulate mtm1 subcellular localization. In Danio rerio (Zebrafish), this protein is Myotubularin-related protein 12 (mtmr12).